Consider the following 256-residue polypeptide: Small ribosomal subunit protein eS1 (256 aa).

The segment covering Met-1–Lys-18 has biased composition (basic residues). The segment at Met-1–Thr-20 is disordered. At Ala-2 the chain carries N-acetylalanine; partial.

It belongs to the eukaryotic ribosomal protein eS1 family. Component of the small ribosomal subunit. Mature ribosomes consist of a small (40S) and a large (60S) subunit. The 40S subunit contains about 33 different proteins and 1 molecule of RNA (18S). The 60S subunit contains about 49 different proteins and 3 molecules of RNA (25S, 5.8S and 5S).

Its subcellular location is the cytoplasm. This Talaromyces stipitatus (strain ATCC 10500 / CBS 375.48 / QM 6759 / NRRL 1006) (Penicillium stipitatum) protein is Small ribosomal subunit protein eS1 (rps1).